The primary structure comprises 226 residues: Late protein I226R (226 aa).

An N-terminal signal peptide occupies residues 1–16 (MKMETFLVCLFHNAAG). N-linked (GlcNAc...) asparagine; by host glycosylation occurs at asparagine 164.

This sequence belongs to the asfivirus I226R family.

Functionally, plays a role in the inhibition of host NF-kappa-B and IRF3 signaling pathways. Mechanistically, promotes the degradation of host IKBKG through enhancing its ubiquitination leading to inhibition of both pathways. The sequence is that of Late protein I226R from African swine fever virus (isolate Pig/Kenya/KEN-50/1950) (ASFV).